A 306-amino-acid chain; its full sequence is Ribosomal protein L11 methyltransferase (306 aa).

Residues T154, G179, D201, and N242 each coordinate S-adenosyl-L-methionine.

Belongs to the methyltransferase superfamily. PrmA family.

It is found in the cytoplasm. It catalyses the reaction L-lysyl-[protein] + 3 S-adenosyl-L-methionine = N(6),N(6),N(6)-trimethyl-L-lysyl-[protein] + 3 S-adenosyl-L-homocysteine + 3 H(+). In terms of biological role, methylates ribosomal protein L11. The sequence is that of Ribosomal protein L11 methyltransferase from Xylella fastidiosa (strain Temecula1 / ATCC 700964).